The primary structure comprises 398 residues: Growth-regulating factor 3 (398 aa).

The segment covering 1–17 (MDLQLKQWRSQQQQQHQ) has biased composition (low complexity). Residues 1–32 (MDLQLKQWRSQQQQQHQTESEEQPSAAKIPKH) are disordered. In terms of domain architecture, QLQ spans 76 to 111 (FFSWAQWQELELQALIYRYMLAGAAVPQELLLPIKK). In terms of domain architecture, WRC spans 144 to 188 (DPEPGRCRRTDGKKWRCSRDVFAGHKYCERHMHRGRNRSRKPVET). 2 consecutive short sequence motifs (bipartite nuclear localization signal) follow at residues 149-159 (RCRRTDGKKWR) and 177-184 (RGRNRSRK). Composition is skewed to polar residues over residues 299-350 (SLQE…RDQQ) and 383-398 (PTSV…QAFH). The interval 299–398 (SLQEADNSSS…QLGVSTQAFH (100 aa)) is disordered.

The protein belongs to the GRF family. As to expression, strongly expressed in actively growing and developing tissues, such as roots, upper stems, and shoot tips containing the shoot apical meristem (SAM) and flower buds. Also expressed in mature flowers, but weakly expressed in mature stems and leaves.

It localises to the nucleus. In terms of biological role, transcription activator that plays a role in the regulation of cell expansion in leaf and cotyledons tissues. Component of a network formed by miR396, the GRFs and their interacting factors (GIFs) acting in the regulation of meristem function, at least partially through the control of cell proliferation. microRNA396-GRF1/GRF3 regulatory module acts as a developmental regulator in the reprogramming of root cells during cyst nematode infection, leading to the formation of the syncytium. This chain is Growth-regulating factor 3 (GRF3), found in Arabidopsis thaliana (Mouse-ear cress).